A 320-amino-acid chain; its full sequence is Aspartate carbamoyltransferase catalytic subunit (320 aa).

Carbamoyl phosphate contacts are provided by Arg58 and Thr59. Lys86 serves as a coordination point for L-aspartate. 3 residues coordinate carbamoyl phosphate: Arg108, His136, and Gln139. Arg169 and Arg223 together coordinate L-aspartate. Positions 264 and 265 each coordinate carbamoyl phosphate.

Belongs to the aspartate/ornithine carbamoyltransferase superfamily. ATCase family. In terms of assembly, heterododecamer (2C3:3R2) of six catalytic PyrB chains organized as two trimers (C3), and six regulatory PyrI chains organized as three dimers (R2).

It catalyses the reaction carbamoyl phosphate + L-aspartate = N-carbamoyl-L-aspartate + phosphate + H(+). The protein operates within pyrimidine metabolism; UMP biosynthesis via de novo pathway; (S)-dihydroorotate from bicarbonate: step 2/3. Its function is as follows. Catalyzes the condensation of carbamoyl phosphate and aspartate to form carbamoyl aspartate and inorganic phosphate, the committed step in the de novo pyrimidine nucleotide biosynthesis pathway. In Cereibacter sphaeroides (strain ATCC 17025 / ATH 2.4.3) (Rhodobacter sphaeroides), this protein is Aspartate carbamoyltransferase catalytic subunit.